Reading from the N-terminus, the 100-residue chain is Glutamyl-tRNA(Gln) amidotransferase subunit C (100 aa).

This sequence belongs to the GatC family. In terms of assembly, heterotrimer of A, B and C subunits.

The enzyme catalyses L-glutamyl-tRNA(Gln) + L-glutamine + ATP + H2O = L-glutaminyl-tRNA(Gln) + L-glutamate + ADP + phosphate + H(+). The catalysed reaction is L-aspartyl-tRNA(Asn) + L-glutamine + ATP + H2O = L-asparaginyl-tRNA(Asn) + L-glutamate + ADP + phosphate + 2 H(+). In terms of biological role, allows the formation of correctly charged Asn-tRNA(Asn) or Gln-tRNA(Gln) through the transamidation of misacylated Asp-tRNA(Asn) or Glu-tRNA(Gln) in organisms which lack either or both of asparaginyl-tRNA or glutaminyl-tRNA synthetases. The reaction takes place in the presence of glutamine and ATP through an activated phospho-Asp-tRNA(Asn) or phospho-Glu-tRNA(Gln). The sequence is that of Glutamyl-tRNA(Gln) amidotransferase subunit C from Rickettsia conorii (strain ATCC VR-613 / Malish 7).